The sequence spans 148 residues: F420H(2)-dependent quinone reductase MT1609 (148 aa).

Coenzyme F420-(gamma-Glu)n contacts are provided by residues 46-48 (AKT), 52-57 (RKTPLM), 68-71 (VASL), 79-83 (VWYHN), and Tyr125.

This sequence belongs to the F420H(2)-dependent quinone reductase family.

It localises to the cell membrane. The enzyme catalyses oxidized coenzyme F420-(gamma-L-Glu)(n) + a quinol + H(+) = reduced coenzyme F420-(gamma-L-Glu)(n) + a quinone. In terms of biological role, involved in a F420-dependent anti-oxidant mechanism that protects M.tuberculosis against oxidative stress and bactericidal agents. Catalyzes the F420H(2)-dependent two-electron reduction of quinones to dihydroquinones, thereby preventing the formation of cytotoxic semiquinones obtained by the one-electron reduction pathway. In vitro, catalyzes the reduction of menadione to menadiol; since menaquinone is the sole quinone electron carrier in the respiratory chain in M.tuberculosis, the physiological electron acceptor for Fqr-mediated F420H(2) oxidation is therefore likely to be the endogenous menaquinone found in the membrane fraction of M.tuberculosis. In Mycobacterium tuberculosis (strain CDC 1551 / Oshkosh), this protein is F420H(2)-dependent quinone reductase MT1609.